The following is a 345-amino-acid chain: UPF0228 protein MA_2656 (345 aa).

Belongs to the UPF0228 family.

The sequence is that of UPF0228 protein MA_2656 from Methanosarcina acetivorans (strain ATCC 35395 / DSM 2834 / JCM 12185 / C2A).